The chain runs to 315 residues: MREPKPQEDLQAIIDDIYRELTPRLGEGKVADYIPQLARVDARHFGMAIVTTGGEVYRVGDAEMPFSIQSISKVFTLTLALGKHGENIWNRVGREPSGSAFNSIVQLEHEGGKPRNPFINAGAIRISDLILAGHTPKELIGEIVRFVRYLADDENIVIDHEVARSETATGYRNIALANFMRSFGRLDHPVEHVLGVYFHHCALAMTCSQLAKAGLFLAAGGTNPLTGHSVVSRQRARRINALMLTCGHYDGSGDFAYRVGLPGKSGVGGGIMAVAPGKASIAVWSPGLNDYGNSLLGSLALEMLAARTGWSVFGP.

Substrate is bound by residues Ser-70, Asn-120, Glu-166, Asn-173, Tyr-197, Tyr-249, and Val-267.

Belongs to the glutaminase family. In terms of assembly, homotetramer.

It catalyses the reaction L-glutamine + H2O = L-glutamate + NH4(+). This is Glutaminase from Rhizobium meliloti (strain 1021) (Ensifer meliloti).